A 111-amino-acid chain; its full sequence is Beta-2-microglobulin (111 aa).

The first 17 residues, methionine 1 to proline 17, serve as a signal peptide directing secretion. The Ig-like C1-type domain maps to proline 20 to phenylalanine 111.

The protein belongs to the beta-2-microglobulin family. As to quaternary structure, heterodimer of an alpha chain and a beta chain. Beta-2-microglobulin is the beta-chain of major histocompatibility complex class I molecules.

It is found in the secreted. Its function is as follows. Component of the class I major histocompatibility complex (MHC). Involved in the presentation of peptide antigens to the immune system. The sequence is that of Beta-2-microglobulin (b2m) from Rostroraja eglanteria (Clearnose skate).